The sequence spans 547 residues: MAAKDVKFGGDARQRMLRGVDILADAVKVTLGPKGRNVVLDKSFGAPRITKDGVSVAKEIELADKFENMGAQMVREVASKTNDVAGDGTTTATVLAQAIVREGAKAVAAGMNPMDLKRGIDKAVIAVVEELKKNTKKITTPAETAQVGTISANGEHEIGEMISQAMQKVGSEGVITVEEAKGLHTELDVVEGMQFDRGYISPYFITNAEKMVADLDNPYILIHEKKLSSLQPMLPLLESVVQSGRPLLIIAEDVDGEALATLVVNKLRGGLKIAAVKAPGFGDRRKAMLEDIAILTGGQVISEDLGIKLETVTLAMLGRAKKVRIEKENTTIVEGAGASDDIKGRCGQIRAQIEETTSDYDREKLQERLAKLAGGVAVIRVGGSTEVEVKERKDRVDDALHATRAAVEEGIVPGGGTALARASTALGNLHFHNDDQRVGAEIIRKALQAPLRQIAHNAGEDGAVIAGKVLESNDYNYGFDAQIGDYKDLVAAGIIDPTKVVRTALQDASSVAGLLITTEAMVAEKPEKKAPAMPAGGGMGGMGDMDF.

ATP-binding positions include Thr30 to Pro33, Lys51, Asp87 to Thr91, Gly415, and Asp496.

This sequence belongs to the chaperonin (HSP60) family. In terms of assembly, forms a cylinder of 14 subunits composed of two heptameric rings stacked back-to-back. Interacts with the co-chaperonin GroES.

Its subcellular location is the cytoplasm. The enzyme catalyses ATP + H2O + a folded polypeptide = ADP + phosphate + an unfolded polypeptide.. In terms of biological role, together with its co-chaperonin GroES, plays an essential role in assisting protein folding. The GroEL-GroES system forms a nano-cage that allows encapsulation of the non-native substrate proteins and provides a physical environment optimized to promote and accelerate protein folding. This is Chaperonin GroEL 1 from Gluconacetobacter diazotrophicus (strain ATCC 49037 / DSM 5601 / CCUG 37298 / CIP 103539 / LMG 7603 / PAl5).